The sequence spans 1191 residues: Phosphatidylinositol 3,4,5-trisphosphate 5-phosphatase 1 (1191 aa).

The SH2 domain occupies 8-104 (WNHGNITRSK…GLVTHLQYPV (97 aa)). The tract at residues 122–148 (SVMSPPELPPRNIPMSAGPSEAKDLPL) is disordered. Positions 127 to 132 (PELPPR) match the SH3-binding 1 motif. Phosphoserine is present on Ser-246. The NPXY motif 1 signature appears at 915-918 (NPNY). Tyr-918 bears the Phosphotyrosine mark. Ser-935 bears the Phosphoserine mark. Tyr-945 bears the Phosphotyrosine mark. Disordered stretches follow at residues 947–994 (QLPK…EARP) and 1021–1191 (YGSV…TAMQ). Positions 962 to 972 (PPTPPSQPPLS) are enriched in pro residues. Thr-964 bears the Phosphothreonine mark. Phosphoserine occurs at positions 967 and 972. The SH3-binding 2 signature appears at 970 to 975 (PLSPKK). The tract at residues 1015–1029 (MFENPLYGSVSSFPK) is interaction with DAB2. An NPXY motif 2 motif is present at residues 1018–1021 (NPLY). A Phosphotyrosine modification is found at Tyr-1021. Residues 1032 to 1046 (PRKEQESPKMLRKEP) are compositionally biased toward basic and acidic residues. The SH3-binding 3 signature appears at 1039-1050 (PKMLRKEPPPCP). Residues 1141–1150 (IPAPRPPLPV) are compositionally biased toward pro residues. The span at 1162-1184 (KGRDYRDNTELPHHGKHRQEEGL) shows a compositional bias: basic and acidic residues.

It belongs to the inositol 1,4,5-trisphosphate 5-phosphatase family. As to quaternary structure, interacts with tyrosine phosphorylated form of SHC1. Interacts with tyrosine phosphorylated form of DOK1. Interacts with tyrosine phosphorylated form of DOK3. Interacts with tyrosine phosphorylated form of SLAMF1/CD150. Interacts with PTPN11/SHP-2 in response to IL-3. Interacts with receptor EPOR. Interacts with receptors MS4A2/FCER1B and FCER1G. Interacts with receptors FCGR2B and FCGR3. Interacts with receptor FCGR2A, leading to regulate gene expression during the phagocytic process. Interacts with GRB2. Interacts with PLCG1. Interacts with tyrosine kinases SRC and TEC. Interacts with CRKL. Interacts with c-Met/MET. Interacts with MILR1 (tyrosine-phosphorylated). Isoform 5 interacts with IL6ST/gp130. Can weakly interact (via NPXY motif 2) with DAB2 (via PID domain); the interaction is impaired by tyrosine phosphorylation of the NPXY motif. Interacts (via SH2 domain) with tyrosine phosphorylated KLRC1 (via ITIM). Interacts with MPL/TPOR. Tyrosine phosphorylated by the members of the SRC family after exposure to a diverse array of extracellular stimuli such as cytokines, growth factors, antibodies, chemokines, integrin ligands and hypertonic and oxidative stress. Phosphorylated upon IgG receptor FCGR2B-binding. Specifically expressed in immune and hematopoietic cells. Levels vary considerably within this compartment. Lost during erythropoiesis when erythroid cells become Ter119+. Increases substantially with T-cell maturation and when resting B-cells are activated. Also present in mature granulocytes, monocyte/macrophages, mast cells and platelets. Isoform 5 is the only form expressed in embryonic stem (ES) cells and is coexpressed with other isoforms in hematopoietic stem cells, and disappears with differentiation.

The protein localises to the cytoplasm. It localises to the cell membrane. Its subcellular location is the membrane raft. The protein resides in the cytoskeleton. The enzyme catalyses a 1,2-diacyl-sn-glycero-3-phospho-(1D-myo-inositol-3,4,5-trisphosphate) + H2O = a 1,2-diacyl-sn-glycero-3-phospho-(1D-myo-inositol-3,4-bisphosphate) + phosphate. The catalysed reaction is a 1,2-diacyl-sn-glycero-3-phospho-(1D-myo-inositol-4,5-bisphosphate) + H2O = a 1,2-diacyl-sn-glycero-3-phospho-(1D-myo-inositol 4-phosphate) + phosphate. It carries out the reaction 1D-myo-inositol 1,3,4,5-tetrakisphosphate + H2O = 1D-myo-inositol 1,3,4-trisphosphate + phosphate. With respect to regulation, activated upon translocation to the sites of synthesis of PtdIns(3,4,5)P3 in the membrane. Functionally, phosphatidylinositol (PtdIns) phosphatase that specifically hydrolyzes the 5-phosphate of phosphatidylinositol-3,4,5-trisphosphate (PtdIns(3,4,5)P3) to produce PtdIns(3,4)P2, thereby negatively regulating the PI3K (phosphoinositide 3-kinase) pathways. Also able to hydrolyze the 5-phosphate of phosphatidylinositol-4,5-bisphosphate (PtdIns(4,5)P3) and inositol 1,3,4,5-tetrakisphosphate. Acts as a negative regulator of B-cell antigen receptor signaling. Mediates signaling from the FC-gamma-RIIB receptor (FCGR2B), playing a central role in terminating signal transduction from activating immune/hematopoietic cell receptor systems. Acts as a negative regulator of myeloid cell proliferation/survival and chemotaxis, mast cell degranulation, immune cells homeostasis, integrin alpha-IIb/beta-3 signaling in platelets and JNK signaling in B-cells. Regulates proliferation of osteoclast precursors, macrophage programming, phagocytosis and activation and is required for endotoxin tolerance. Involved in the control of cell-cell junctions, CD32a signaling in neutrophils and modulation of EGF-induced phospholipase C activity. Key regulator of neutrophil migration, by governing the formation of the leading edge and polarization required for chemotaxis. Modulates FCGR3/CD16-mediated cytotoxicity in NK cells. Mediates the activin/TGF-beta-induced apoptosis through its Smad-dependent expression. This chain is Phosphatidylinositol 3,4,5-trisphosphate 5-phosphatase 1 (Inpp5d), found in Mus musculus (Mouse).